Consider the following 274-residue polypeptide: 2-dehydro-3-deoxyphosphooctonate aldolase (274 aa).

The protein belongs to the KdsA family.

Its subcellular location is the cytoplasm. The catalysed reaction is D-arabinose 5-phosphate + phosphoenolpyruvate + H2O = 3-deoxy-alpha-D-manno-2-octulosonate-8-phosphate + phosphate. Its pathway is carbohydrate biosynthesis; 3-deoxy-D-manno-octulosonate biosynthesis; 3-deoxy-D-manno-octulosonate from D-ribulose 5-phosphate: step 2/3. It functions in the pathway bacterial outer membrane biogenesis; lipopolysaccharide biosynthesis. This Legionella pneumophila (strain Corby) protein is 2-dehydro-3-deoxyphosphooctonate aldolase.